The chain runs to 285 residues: Pantothenate synthetase (285 aa).

An ATP-binding site is contributed by 32-39; sequence MGALHDGH. Residue His-39 is the Proton donor of the active site. Residue Gln-63 participates in (R)-pantoate binding. Gln-63 contacts beta-alanine. Residue 149–152 participates in ATP binding; sequence GEKD. Residue Gln-155 coordinates (R)-pantoate. ATP contacts are provided by residues Val-178 and 186–189; that span reads MSSR.

It belongs to the pantothenate synthetase family. In terms of assembly, homodimer.

The protein localises to the cytoplasm. The enzyme catalyses (R)-pantoate + beta-alanine + ATP = (R)-pantothenate + AMP + diphosphate + H(+). It participates in cofactor biosynthesis; (R)-pantothenate biosynthesis; (R)-pantothenate from (R)-pantoate and beta-alanine: step 1/1. In terms of biological role, catalyzes the condensation of pantoate with beta-alanine in an ATP-dependent reaction via a pantoyl-adenylate intermediate. This Ruegeria pomeroyi (strain ATCC 700808 / DSM 15171 / DSS-3) (Silicibacter pomeroyi) protein is Pantothenate synthetase.